The chain runs to 461 residues: Acetylcholine receptor subunit alpha (461 aa).

The first 24 residues, 1–24 (MILCSYWHVGLVLLLFSCCGLVLG), serve as a signal peptide directing secretion. Residues 25-234 (SEHETRLVAN…ITYHFIMQRI (210 aa)) lie on the Extracellular side of the membrane. 2 disulfides stabilise this stretch: C152-C166 and C216-C217. A glycan (N-linked (GlcNAc...) asparagine) is linked at N165. 3 helical membrane passes run 235 to 259 (PLYF…VFYL), 267 to 285 (MTLS…LVIV), and 301 to 320 (YMLF…VVVI). Over 321–432 (NTHHRSPSTH…WKYVAMVIDH (112 aa)) the chain is Cytoplasmic. The helical transmembrane segment at 433–451 (ILLCVFMLICIIGTVSVFA) threads the bilayer.

This sequence belongs to the ligand-gated ion channel (TC 1.A.9) family. Acetylcholine receptor (TC 1.A.9.1) subfamily. Alpha-1/CHRNA1 sub-subfamily. As to quaternary structure, pentamer of two alpha chains, and one each of the beta, delta, and gamma chains.

It localises to the postsynaptic cell membrane. The protein resides in the cell membrane. The catalysed reaction is K(+)(in) = K(+)(out). It catalyses the reaction Na(+)(in) = Na(+)(out). Its function is as follows. Upon acetylcholine binding, the AChR responds by an extensive change in conformation that affects all subunits and leads to opening of an ion-conducting channel across the plasma membrane. The chain is Acetylcholine receptor subunit alpha (CHRNA1) from Torpedo marmorata (Marbled electric ray).